Here is a 229-residue protein sequence, read N- to C-terminus: Putative germin-like protein 12-3 (229 aa).

Residues 1–22 form the signal peptide; the sequence is MASSNFFLLIPLIALVTTQAMA. Cys32 and Cys47 form a disulfide bridge. The region spanning 62 to 217 is the Cupin type-1 domain; it reads ANLDKPMDIT…AFQVDKKAVD (156 aa). N-linked (GlcNAc...) asparagine glycosylation occurs at Asn78. His111, His113, Glu118, and His162 together coordinate Mn(2+).

It belongs to the germin family. As to quaternary structure, oligomer (believed to be a pentamer but probably hexamer).

The protein localises to the secreted. The protein resides in the extracellular space. Its subcellular location is the apoplast. In terms of biological role, may play a role in plant defense. Probably has no oxalate oxidase activity even if the active site is conserved. The chain is Putative germin-like protein 12-3 from Oryza sativa subsp. japonica (Rice).